Here is a 173-residue protein sequence, read N- to C-terminus: Ribulose bisphosphate carboxylase small subunit, chloroplastic 2 (173 aa).

Residues 1-33 constitute a chloroplast transit peptide; it reads VVLSKECAKPLATPKVTLNKRGFATTIATKNRE.

It belongs to the RuBisCO small chain family. Heterohexadecamer of 8 large and 8 small subunits.

It is found in the plastid. Its subcellular location is the chloroplast. Functionally, ruBisCO catalyzes two reactions: the carboxylation of D-ribulose 1,5-bisphosphate, the primary event in carbon dioxide fixation, as well as the oxidative fragmentation of the pentose substrate. Both reactions occur simultaneously and in competition at the same active site. Although the small subunit is not catalytic it is essential for maximal activity. The polypeptide is Ribulose bisphosphate carboxylase small subunit, chloroplastic 2 (Acetabularia acetabulum (Mermaid's wine glass)).